A 557-amino-acid polypeptide reads, in one-letter code: 2-isopropylmalate synthase (557 aa).

The 275-residue stretch at 33-307 (PIWCSSDLRD…DPQLDFSDID (275 aa)) folds into the Pyruvate carboxyltransferase domain. Mg(2+) contacts are provided by Asp42, His246, His248, and Asn282. A regulatory domain region spans residues 439–557 (ANSPYALVSH…SLSQQEAKAA (119 aa)).

It belongs to the alpha-IPM synthase/homocitrate synthase family. LeuA type 2 subfamily. Homodimer. The cofactor is Mg(2+).

It localises to the cytoplasm. The enzyme catalyses 3-methyl-2-oxobutanoate + acetyl-CoA + H2O = (2S)-2-isopropylmalate + CoA + H(+). It participates in amino-acid biosynthesis; L-leucine biosynthesis; L-leucine from 3-methyl-2-oxobutanoate: step 1/4. Its function is as follows. Catalyzes the condensation of the acetyl group of acetyl-CoA with 3-methyl-2-oxobutanoate (2-ketoisovalerate) to form 3-carboxy-3-hydroxy-4-methylpentanoate (2-isopropylmalate). In Pseudomonas putida (strain W619), this protein is 2-isopropylmalate synthase.